Here is a 541-residue protein sequence, read N- to C-terminus: Probable inorganic phosphate transporter 1-8 (541 aa).

Topologically, residues 1–28 (MARQEQQQHLQVLSALDAAKTQWYHFTA) are cytoplasmic. A helical membrane pass occupies residues 29–49 (IVVAGMGFFTDAYDLFCISLV). The Extracellular segment spans residues 50-74 (TKLLGRIYYTDLAKENPGSLPPNVA). The chain crosses the membrane as a helical span at residues 75-95 (AAVNGVAFCGTLAGQLFFGWL). The Cytoplasmic portion of the chain corresponds to 96-102 (GDKLGRK). The chain crosses the membrane as a helical span at residues 103-123 (SVYGMTLLMMVICSIASGLSF). The Extracellular segment spans residues 124-126 (SHT). Residues 127-147 (PTSVMATLCFFRFWLGFGIGG) traverse the membrane as a helical segment. The Cytoplasmic segment spans residues 148–168 (DYPLSATIMSEYANKKTRGAF). Residues 169-189 (IAAVFAMQGFGILAGGIVTLI) traverse the membrane as a helical segment. Over 190–215 (ISSAFRAGFPAPAYQDDRAGSTVRQA) the chain is Extracellular. The chain crosses the membrane as a helical span at residues 216-236 (DYVWRIILMLGAMPALLTYYW). The Cytoplasmic portion of the chain corresponds to 237–297 (RMKMPETARY…GLFSRQFARR (61 aa)). Residues 298–318 (HGLHLVGTATTWFLLDIAFYS) form a helical membrane-spanning segment. The Extracellular segment spans residues 319–353 (QNLFQKDIFTSINWIPKAKTMSALEEVFRIARAQT). The helical transmembrane segment at 354–374 (LIALCGTVPGYWFTVFLIDIV) threads the bilayer. The Cytoplasmic portion of the chain corresponds to 375–376 (GR). Residues 377-397 (FAIQLLGFFMMTVFMLGLAVP) traverse the membrane as a helical segment. Topologically, residues 398 to 404 (YHHWTTK) are extracellular. Residues 405–425 (GNHIGFVVMYAFTFFFANFGP) form a helical membrane-spanning segment. The Cytoplasmic portion of the chain corresponds to 426–447 (NSTTFIVPAEIFPARLRSTCHG). Residues 448 to 468 (ISAAAGKAGAIIGSFGFLYAA) traverse the membrane as a helical segment. At 469–486 (QDPHKPDAGYKPGIGVRN) the chain is on the extracellular side. Residues 487–507 (SLFVLAGCNLLGFICTFLVPE) traverse the membrane as a helical segment. The Cytoplasmic segment spans residues 508–541 (SKGKSLEEMSGEAEDDDDEVAAAGGGAAVRPQTA). The tract at residues 514–541 (EEMSGEAEDDDDEVAAAGGGAAVRPQTA) is disordered. Over residues 516 to 527 (MSGEAEDDDDEV) the composition is skewed to acidic residues.

The protein belongs to the major facilitator superfamily. Phosphate:H(+) symporter (TC 2.A.1.9) family.

It is found in the membrane. In terms of biological role, high-affinity transporter for external inorganic phosphate. The sequence is that of Probable inorganic phosphate transporter 1-8 (PHT1-8) from Oryza sativa subsp. japonica (Rice).